A 163-amino-acid chain; its full sequence is Nucleotide-binding protein MT0592 (163 aa).

This sequence belongs to the YajQ family.

Nucleotide-binding protein. This is Nucleotide-binding protein MT0592 from Mycobacterium tuberculosis (strain CDC 1551 / Oshkosh).